We begin with the raw amino-acid sequence, 213 residues long: MGFTMDEEVIFETPRELISIKRIKDIPRSKDTHVFAACITSDGYPLIGARRTSFAFQAILSQQNSDSIFRVSTKLLRFMYYNELREIFRRLRKGSINNIDPHFEELILLGGKLDKKESIKDCLRRELKEESDEHITVKEFGNVILKLTTSDKLFNKVYIGYCMACFINQSLEDLSHTSIYNVEIRKIKSLNDCINDDKYEYLSYIYNILINSK.

N(7)-methyl-GTP contacts are provided by E16 and R50. In terms of domain architecture, Nudix hydrolase spans 30–209; the sequence is KDTHVFAACI…EYLSYIYNIL (180 aa). Positions 111–132 match the Nudix box motif; sequence GKLDKKESIKDCLRRELKEESD. Mg(2+)-binding residues include E126 and E130. D151 contacts N(7)-methyl-GTP. Position 183 (E183) interacts with Mg(2+).

It belongs to the Nudix hydrolase family. Interacts with the late transcription elongation factor VLTF-4/OPG110. Interacts with the late transcription factors VLTF-1. It depends on Mg(2+) as a cofactor. Mn(2+) serves as cofactor.

The enzyme catalyses a 5'-end (N(7)-methyl 5'-triphosphoguanosine)-guanosine in mRNA + H2O = a 5'-end phospho-guanosine in mRNA + N(7)-methyl-GDP + 2 H(+). Acts with RNA polymerase to initiate transcription from late gene promoters. The sequence is that of mRNA-decapping protein OPG121 (OPG121) from Cynomys gunnisoni (Gunnison's prairie dog).